A 448-amino-acid chain; its full sequence is MTGPEHGSASTIEILPVIGLPEFRPGDDLSAAVAAAAPWLRDGDVVVVTSKVVSKCEGRLVPAPEDPEQRDRLRRKLIEDEAVRVLARKDRTLITENRLGLVQAAAGVDGSNVGRSELALLPVDPDASAATLRAGLRERLGVTVAVVITDTMGRAWRNGQTDAAVGAAGLAVLRNYAGVRDPYGNELVVTEVAVADEIAAAADLVKGKLTATPVAVVRGFGVSDDGSTARQLLRPGANDLFWLGTAEALELGRQQAQLLRRSVRRFSTDPVPGDLVEAAVAEALTAPAPHHTRPTRFVWLQTPAIRARLLDRMKDKWRSDLTSDGLPADAIERRVARGQILYDAPEVVIPMLVPDGAHSYPDAARTDAEHTMFTVAVGAAVQALLVALAVRGLGSCWIGSTIFAADLVRDELDLPVDWEPLGAIAIGYADEPSGLRDPVPAADLLILK.

The interval 1 to 244 (MTGPEHGSAS…PGANDLFWLG (244 aa)) is coenzyme F420:L-glutamate ligase. Residues 20 to 23 (LPEF), Ser-50, and Lys-55 contribute to the GTP site. Asp-109 is a binding site for a divalent metal cation. GTP is bound at residue Asn-112. Positions 150 and 151 each coordinate a divalent metal cation. A dehydro-coenzyme F420-0 reductase region spans residues 245–448 (TAEALELGRQ…VPAADLLILK (204 aa)). Residues 260 to 264 (RRSVR) and Ala-288 each bind FMN. Position 320 (Asp-320) interacts with coenzyme F420-(gamma-Glu)n. The FMN site is built by Gly-399 and Arg-436.

It in the N-terminal section; belongs to the CofE family. Mg(2+) serves as cofactor. Mn(2+) is required as a cofactor. Requires K(+) as cofactor.

The enzyme catalyses oxidized coenzyme F420-0 + GTP + L-glutamate = oxidized coenzyme F420-1 + GDP + phosphate + H(+). It catalyses the reaction oxidized coenzyme F420-1 + GTP + L-glutamate = oxidized coenzyme F420-2 + GDP + phosphate + H(+). It carries out the reaction oxidized coenzyme F420-(gamma-L-Glu)(n) + GTP + L-glutamate = oxidized coenzyme F420-(gamma-L-Glu)(n+1) + GDP + phosphate + H(+). The catalysed reaction is oxidized coenzyme F420-0 + FMN + H(+) = dehydro coenzyme F420-0 + FMNH2. It functions in the pathway cofactor biosynthesis; coenzyme F420 biosynthesis. Functionally, bifunctional enzyme that catalyzes the GTP-dependent successive addition of multiple gamma-linked L-glutamates to the L-lactyl phosphodiester of 7,8-didemethyl-8-hydroxy-5-deazariboflavin (F420-0) to form polyglutamated F420 derivatives, and the FMNH2-dependent reduction of dehydro-F420-0 to form F420-0. The chain is Bifunctional F420 biosynthesis protein FbiB from Mycobacterium tuberculosis (strain ATCC 25177 / H37Ra).